The sequence spans 79 residues: ATP synthase subunit c (79 aa).

2 helical membrane-spanning segments follow: residues valine 7–isoleucine 27 and isoleucine 56–isoleucine 76.

It belongs to the ATPase C chain family. In terms of assembly, F-type ATPases have 2 components, F(1) - the catalytic core - and F(0) - the membrane proton channel. F(1) has five subunits: alpha(3), beta(3), gamma(1), delta(1), epsilon(1). F(0) has three main subunits: a(1), b(2) and c(10-14). The alpha and beta chains form an alternating ring which encloses part of the gamma chain. F(1) is attached to F(0) by a central stalk formed by the gamma and epsilon chains, while a peripheral stalk is formed by the delta and b chains.

It is found in the cell membrane. Functionally, f(1)F(0) ATP synthase produces ATP from ADP in the presence of a proton or sodium gradient. F-type ATPases consist of two structural domains, F(1) containing the extramembraneous catalytic core and F(0) containing the membrane proton channel, linked together by a central stalk and a peripheral stalk. During catalysis, ATP synthesis in the catalytic domain of F(1) is coupled via a rotary mechanism of the central stalk subunits to proton translocation. Its function is as follows. Key component of the F(0) channel; it plays a direct role in translocation across the membrane. A homomeric c-ring of between 10-14 subunits forms the central stalk rotor element with the F(1) delta and epsilon subunits. In Clostridium botulinum (strain Hall / ATCC 3502 / NCTC 13319 / Type A), this protein is ATP synthase subunit c.